A 343-amino-acid chain; its full sequence is tRNA N6-adenosine threonylcarbamoyltransferase (343 aa).

The Fe cation site is built by His120 and His124. Substrate contacts are provided by residues Val142–Gly146, Asp175, Gly188, Asp192, and Asn281. Asp309 serves as a coordination point for Fe cation.

This sequence belongs to the KAE1 / TsaD family. It depends on Fe(2+) as a cofactor.

It is found in the cytoplasm. The catalysed reaction is L-threonylcarbamoyladenylate + adenosine(37) in tRNA = N(6)-L-threonylcarbamoyladenosine(37) in tRNA + AMP + H(+). Its function is as follows. Required for the formation of a threonylcarbamoyl group on adenosine at position 37 (t(6)A37) in tRNAs that read codons beginning with adenine. Is involved in the transfer of the threonylcarbamoyl moiety of threonylcarbamoyl-AMP (TC-AMP) to the N6 group of A37, together with TsaE and TsaB. TsaD likely plays a direct catalytic role in this reaction. This chain is tRNA N6-adenosine threonylcarbamoyltransferase, found in Halalkalibacterium halodurans (strain ATCC BAA-125 / DSM 18197 / FERM 7344 / JCM 9153 / C-125) (Bacillus halodurans).